Reading from the N-terminus, the 429-residue chain is Glutamate-1-semialdehyde 2,1-aminomutase (429 aa).

Residue Lys-267 is modified to N6-(pyridoxal phosphate)lysine.

This sequence belongs to the class-III pyridoxal-phosphate-dependent aminotransferase family. HemL subfamily. Homodimer. It depends on pyridoxal 5'-phosphate as a cofactor.

It is found in the cytoplasm. The catalysed reaction is (S)-4-amino-5-oxopentanoate = 5-aminolevulinate. It functions in the pathway porphyrin-containing compound metabolism; protoporphyrin-IX biosynthesis; 5-aminolevulinate from L-glutamyl-tRNA(Glu): step 2/2. This Xanthomonas axonopodis pv. citri (strain 306) protein is Glutamate-1-semialdehyde 2,1-aminomutase.